A 35-amino-acid polypeptide reads, in one-letter code: Small toxic polypeptide LdrA (35 aa).

The chain crosses the membrane as a helical span at residues 8–28; the sequence is MIFWHDLAAPILAGIITAAIV.

This sequence belongs to the Ldr toxic peptide family.

It is found in the cell inner membrane. Functionally, toxic component of a type I toxin-antitoxin (TA) system. Inhibits ATP synthesis possibly due to its insertion in the cell inner membrane, ATP levels drop over 50% 2 minutes after induction. Overexpression is toxic leading to cell death, it inhibits cell growth within 30 minutes; C-terminally tagged versions of the protein are toxic while N-terminally tagged versions are not. This is Small toxic polypeptide LdrA (ldrA) from Escherichia coli (strain K12).